A 399-amino-acid chain; its full sequence is MSKDKKNEDKETLEELKELSEWQKRNQEYLKKKAEEEAALAEEKEKERQARMGEESEKSEDKQDQESETDQEDSESAKEESEEKVASSEADKEKEEKEEPESKEKEEQDKKLAKKATKEKPAKAKIPGIHILRAFTILFPSLLLLFVSAYLLSPYATMKDIRVEGTVQTTADDIRQASGIQDSDYTINLLLDKAKYEKQIKSNYWVESAQLVYQFPTKFTIKVKEYDIVAYYISGENHYPILSSGQLETSSVSLNSLPETYLSVLFNDSEQIKVFVSELAQISPELKAAIQKVELAPSKVTSDLIRLTMNDSDEVLVPLSEMSKKLPYYSKIKPQLSEPSVVDMEAGIYSYTVADKLIMEAEEKAKQEAKEAEKKQEEEQKKQEEESNRNQTTQRSSRR.

Disordered stretches follow at residues 1 to 23 (MSKD…SEWQ) and 35 to 119 (EEEA…ATKE). At 1–133 (MSKDKKNEDK…AKIPGIHILR (133 aa)) the chain is on the cytoplasmic side. Basic and acidic residues-rich tracts occupy residues 35-65 (EEEA…KQDQ) and 75-119 (ESAK…ATKE). A helical transmembrane segment spans residues 134 to 154 (AFTILFPSLLLLFVSAYLLSP). The Extracellular portion of the chain corresponds to 155–399 (YATMKDIRVE…NQTTQRSSRR (245 aa)). The 71-residue stretch at 156-226 (ATMKDIRVEG…TKFTIKVKEY (71 aa)) folds into the POTRA domain. Residues 364-388 (KAKQEAKEAEKKQEEEQKKQEEESN) are compositionally biased toward basic and acidic residues. The interval 364-399 (KAKQEAKEAEKKQEEEQKKQEEESNRNQTTQRSSRR) is disordered. A compositionally biased stretch (polar residues) spans 389 to 399 (RNQTTQRSSRR).

The protein belongs to the FtsQ/DivIB family. DivIB subfamily.

It is found in the cell membrane. Functionally, cell division protein that may be involved in stabilizing or promoting the assembly of the division complex. In Streptococcus pneumoniae serotype 4 (strain ATCC BAA-334 / TIGR4), this protein is Cell division protein DivIB.